The sequence spans 259 residues: Deoxyribose-phosphate aldolase (259 aa).

Residue aspartate 102 is the Proton donor/acceptor of the active site. The active-site Schiff-base intermediate with acetaldehyde is lysine 167. The Proton donor/acceptor role is filled by lysine 201.

This sequence belongs to the DeoC/FbaB aldolase family. DeoC type 2 subfamily.

It localises to the cytoplasm. The enzyme catalyses 2-deoxy-D-ribose 5-phosphate = D-glyceraldehyde 3-phosphate + acetaldehyde. It functions in the pathway carbohydrate degradation; 2-deoxy-D-ribose 1-phosphate degradation; D-glyceraldehyde 3-phosphate and acetaldehyde from 2-deoxy-alpha-D-ribose 1-phosphate: step 2/2. Catalyzes a reversible aldol reaction between acetaldehyde and D-glyceraldehyde 3-phosphate to generate 2-deoxy-D-ribose 5-phosphate. The sequence is that of Deoxyribose-phosphate aldolase from Photorhabdus laumondii subsp. laumondii (strain DSM 15139 / CIP 105565 / TT01) (Photorhabdus luminescens subsp. laumondii).